Reading from the N-terminus, the 148-residue chain is D-aminoacyl-tRNA deacylase (148 aa).

The Gly-cisPro motif, important for rejection of L-amino acids motif lies at 137–138 (GP).

The protein belongs to the DTD family. As to quaternary structure, homodimer.

The protein localises to the cytoplasm. It catalyses the reaction glycyl-tRNA(Ala) + H2O = tRNA(Ala) + glycine + H(+). The catalysed reaction is a D-aminoacyl-tRNA + H2O = a tRNA + a D-alpha-amino acid + H(+). In terms of biological role, an aminoacyl-tRNA editing enzyme that deacylates mischarged D-aminoacyl-tRNAs. Also deacylates mischarged glycyl-tRNA(Ala), protecting cells against glycine mischarging by AlaRS. Acts via tRNA-based rather than protein-based catalysis; rejects L-amino acids rather than detecting D-amino acids in the active site. By recycling D-aminoacyl-tRNA to D-amino acids and free tRNA molecules, this enzyme counteracts the toxicity associated with the formation of D-aminoacyl-tRNA entities in vivo and helps enforce protein L-homochirality. The sequence is that of D-aminoacyl-tRNA deacylase from Finegoldia magna (strain ATCC 29328 / DSM 20472 / WAL 2508) (Peptostreptococcus magnus).